A 121-amino-acid polypeptide reads, in one-letter code: MSISKDDILNAVAEMSVMDVVELITMMEEKFGVSAAAAVAVAAGPAEAAEEKTEFDVILKGIGGNKVAVIKAVRGATGLGLKEAKDLVESAPAALKEGVSKDDAEALKKALEEAGAEVEVK.

The protein belongs to the bacterial ribosomal protein bL12 family. In terms of assembly, homodimer. Part of the ribosomal stalk of the 50S ribosomal subunit. Forms a multimeric L10(L12)X complex, where L10 forms an elongated spine to which 2 to 4 L12 dimers bind in a sequential fashion. Binds GTP-bound translation factors.

Forms part of the ribosomal stalk which helps the ribosome interact with GTP-bound translation factors. Is thus essential for accurate translation. This is Large ribosomal subunit protein bL12 from Proteus mirabilis (strain HI4320).